A 206-amino-acid polypeptide reads, in one-letter code: Triafestin-2 (206 aa).

The N-terminal stretch at 1–18 (MKTILAVIFFGILAFAFA) is a signal peptide. Residues N25, N55, and N178 are each glycosylated (N-linked (GlcNAc...) asparagine).

It belongs to the calycin superfamily. Triabin family. In terms of assembly, interacts with host coagulation factor XII (F12) (inactive and activated) (via amino acids 1-77). Interacts with host high molecular weight kininogen (KNG1) (via amino acids 402-532). In terms of tissue distribution, salivary gland (at protein level).

The protein resides in the secreted. With respect to regulation, zn(2+) modulates binding to host coagulation factor XII (F12) and high molecular weight kininogen (KNG1). Functionally, suppresses activation of the host plasma kallikrein-kinin system, leading to inhibition of the intrinsic coagulation pathway. Blocks host coagulation factor XII (F12) and prekallikrein (KLKB1) reciprocal activation without affecting their amidolytic activities. Blocks binding of host F12 and high molecular weight kininogen (KNG1) to negatively charged surfaces. Attenuates generation of bradykinin by interfering with activation of host kallikrein-kinin system. The protein is Triafestin-2 of Triatoma infestans (Assassin bug).